Reading from the N-terminus, the 444-residue chain is MWLFTVNQVLRKMQRRHSSNTDNIPPERNRSQALSSEASVDEGGVFESLKAEAASPPALFSGLSGSLPTSSFPSSLVLGSSAGGGDVFIQMPASREEGGGRGEGGAYHHRQPHHHFHHGGHRGGSLLQHVGGDHRGHSEEGGDEQPGTPAPALSELKAVICWLQKGLPFILILLAKLCFQHKLGIAVCIGMASTFAYANSTLREQVSLKEKRSVLVILWILAFLAGNTLYVLYTFSSQQLYNSLIFLKPNLETLDFFDLLWIVGIADFVLKYITIALKCLIVALPKIILAVKSKGKFYLVIEELSQLFRSLVPIQLWYKYIMGDDSSNSYFLGGVLIVLYSLCKSFDICGRVGGVRKALKLLCTSQNYGVRATGQQCTEAGDICAICQAEFREPLILLCQHVFCEECLCLWLDRERTCPLSRSVAVDTLRCWKDGATSAHFQVY.

Over M1–H181 the chain is Extracellular. Disordered stretches follow at residues M13–D41 and P92–P149. Over residues Y107 to H121 the composition is skewed to basic residues. The segment covering G131–E140 has biased composition (basic and acidic residues). A helical membrane pass occupies residues K182–L202. The Cytoplasmic segment spans residues R203–V214. Residues L215–F235 form a helical membrane-spanning segment. At S236–D255 the chain is on the extracellular side. A helical transmembrane segment spans residues F256 to A276. Residues L277–S329 lie on the Cytoplasmic side of the membrane. The chain crosses the membrane as a helical span at residues Y330 to G350. The Extracellular portion of the chain corresponds to R351 to Y444. An RING-type; degenerate zinc finger spans residues C384–R422.

It localises to the membrane. In terms of biological role, E3 ubiquitin-protein ligase that negatively regulates IL3-dependent cellular responses through IL3RA ubiquitination and degradation by the proteasome, having an anti-inflammatory effect. In Pongo abelii (Sumatran orangutan), this protein is RING finger and transmembrane domain-containing protein 2 (RNFT2).